A 214-amino-acid polypeptide reads, in one-letter code: Thiamine-phosphate synthase (214 aa).

4-amino-2-methyl-5-(diphosphooxymethyl)pyrimidine contacts are provided by residues 37 to 41 (QLRDK) and N69. Mg(2+) is bound by residues D70 and D89. S108 contributes to the 4-amino-2-methyl-5-(diphosphooxymethyl)pyrimidine binding site. A 2-[(2R,5Z)-2-carboxy-4-methylthiazol-5(2H)-ylidene]ethyl phosphate-binding site is contributed by 134–136 (TDS). K137 is a binding site for 4-amino-2-methyl-5-(diphosphooxymethyl)pyrimidine. 2-[(2R,5Z)-2-carboxy-4-methylthiazol-5(2H)-ylidene]ethyl phosphate is bound by residues G167 and 187 to 188 (IS).

This sequence belongs to the thiamine-phosphate synthase family. Mg(2+) is required as a cofactor.

It carries out the reaction 2-[(2R,5Z)-2-carboxy-4-methylthiazol-5(2H)-ylidene]ethyl phosphate + 4-amino-2-methyl-5-(diphosphooxymethyl)pyrimidine + 2 H(+) = thiamine phosphate + CO2 + diphosphate. The catalysed reaction is 2-(2-carboxy-4-methylthiazol-5-yl)ethyl phosphate + 4-amino-2-methyl-5-(diphosphooxymethyl)pyrimidine + 2 H(+) = thiamine phosphate + CO2 + diphosphate. The enzyme catalyses 4-methyl-5-(2-phosphooxyethyl)-thiazole + 4-amino-2-methyl-5-(diphosphooxymethyl)pyrimidine + H(+) = thiamine phosphate + diphosphate. It functions in the pathway cofactor biosynthesis; thiamine diphosphate biosynthesis; thiamine phosphate from 4-amino-2-methyl-5-diphosphomethylpyrimidine and 4-methyl-5-(2-phosphoethyl)-thiazole: step 1/1. Its function is as follows. Condenses 4-methyl-5-(beta-hydroxyethyl)thiazole monophosphate (THZ-P) and 2-methyl-4-amino-5-hydroxymethyl pyrimidine pyrophosphate (HMP-PP) to form thiamine monophosphate (TMP). The protein is Thiamine-phosphate synthase of Natronomonas pharaonis (strain ATCC 35678 / DSM 2160 / CIP 103997 / JCM 8858 / NBRC 14720 / NCIMB 2260 / Gabara) (Halobacterium pharaonis).